The chain runs to 140 residues: Bacilliredoxin STH2395 (140 aa).

This sequence belongs to the bacilliredoxin family.

The protein is Bacilliredoxin STH2395 of Symbiobacterium thermophilum (strain DSM 24528 / JCM 14929 / IAM 14863 / T).